Consider the following 574-residue polypeptide: Septation ring formation regulator EzrA (574 aa).

Residues 1–7 lie on the Extracellular side of the membrane; sequence MSSGIIL. Residues 8–26 form a helical membrane-spanning segment; the sequence is LIVAIVLLVIIAYLVGVII. Residues 27 to 574 lie on the Cytoplasmic side of the membrane; that stretch reads RKRNDSLITS…YEKTREHIRF (548 aa). Coiled-coil stretches lie at residues 102-141, 274-350, and 459-520; these read NFIRAKHEINSVESQLNLVEEDIASIREALNILKEQEEKN, ELVT…ETES, and QLEA…SFEA.

It belongs to the EzrA family.

Its subcellular location is the cell membrane. Negative regulator of FtsZ ring formation; modulates the frequency and position of FtsZ ring formation. Inhibits FtsZ ring formation at polar sites. Interacts either with FtsZ or with one of its binding partners to promote depolymerization. This is Septation ring formation regulator EzrA from Streptococcus pyogenes serotype M1.